Reading from the N-terminus, the 153-residue chain is H/ACA ribonucleoprotein complex subunit 2 (153 aa).

Lysine 3 is covalently cross-linked (Glycyl lysine isopeptide (Lys-Gly) (interchain with G-Cter in SUMO2)). A Glycyl lysine isopeptide (Lys-Gly) (interchain with G-Cter in SUMO); alternate cross-link involves residue lysine 5. Lysine 5 participates in a covalent cross-link: Glycyl lysine isopeptide (Lys-Gly) (interchain with G-Cter in SUMO1); alternate. A Glycyl lysine isopeptide (Lys-Gly) (interchain with G-Cter in SUMO2); alternate cross-link involves residue lysine 5. A Phosphoserine modification is found at serine 19.

Belongs to the eukaryotic ribosomal protein eL8 family. In terms of assembly, part of the H/ACA small nucleolar ribonucleoprotein (H/ACA snoRNP) complex, which contains NHP2/NOLA2, GAR1/NOLA1, NOP10/NOLA3, and DKC1/NOLA4, which is presumed to be the catalytic subunit. The complex contains a stable core formed by binding of one or two NOP10-DKC1 heterodimers to NHP2; GAR1 subsequently binds to this core via DKC1. The complex binds a box H/ACA small nucleolar RNA (snoRNA), which may target the specific site of modification within the RNA substrate. During assembly, the complex contains NAF1 instead of GAR1/NOLA1. The complex also interacts with TERC, which contains a 3'-terminal domain related to the box H/ACA snoRNAs. Specific interactions with snoRNAs or TERC are mediated by GAR1 and NHP2. Associates with NOLC1/NOPP140. H/ACA snoRNPs interact with the SMN complex, consisting of SMN1 or SMN2, GEMIN2/SIP1, DDX20/GEMIN3, and GEMIN4. This is mediated by interaction between GAR1 and SMN1 or SMN2. The SMN complex may be required for correct assembly of the H/ACA snoRNP complex. Component of the telomerase holoenzyme complex composed of one molecule of TERT, one molecule of WRAP53/TCAB1, two molecules of H/ACA ribonucleoprotein complex subunits DKC1, NOP10, NHP2 and GAR1, and a telomerase RNA template component (TERC). The telomerase holoenzyme complex is associated with TEP1, SMG6/EST1A and POT1.

The protein localises to the nucleus. The protein resides in the nucleolus. It is found in the cajal body. In terms of biological role, required for ribosome biogenesis and telomere maintenance. Part of the H/ACA small nucleolar ribonucleoprotein (H/ACA snoRNP) complex, which catalyzes pseudouridylation of rRNA. This involves the isomerization of uridine such that the ribose is subsequently attached to C5, instead of the normal N1. Each rRNA can contain up to 100 pseudouridine ('psi') residues, which may serve to stabilize the conformation of rRNAs. May also be required for correct processing or intranuclear trafficking of TERC, the RNA component of the telomerase reverse transcriptase (TERT) holoenzyme. This is H/ACA ribonucleoprotein complex subunit 2 (NHP2) from Pongo abelii (Sumatran orangutan).